We begin with the raw amino-acid sequence, 352 residues long: Holliday junction branch migration complex subunit RuvB (352 aa).

The tract at residues 13–201 is large ATPase domain (RuvB-L); it reads IPRSRKELRL…FGLCHKIEFY (189 aa). Residues L37, R41, G82, K85, T86, T87, 148 to 150, R191, Y201, and R238 contribute to the ATP site; that span reads EDF. Residue T86 participates in Mg(2+) binding. The interval 202 to 273 is small ATPAse domain (RuvB-S); that stretch reads SNDELKQIIF…IIEKALDSQK (72 aa). Residues 276–352 form a head domain (RuvB-H) region; that stretch reads NRGLDNVDRK…KYISSNNEKY (77 aa). The DNA site is built by R330 and R335.

Belongs to the RuvB family. As to quaternary structure, homohexamer. Forms an RuvA(8)-RuvB(12)-Holliday junction (HJ) complex. HJ DNA is sandwiched between 2 RuvA tetramers; dsDNA enters through RuvA and exits via RuvB. An RuvB hexamer assembles on each DNA strand where it exits the tetramer. Each RuvB hexamer is contacted by two RuvA subunits (via domain III) on 2 adjacent RuvB subunits; this complex drives branch migration. In the full resolvosome a probable DNA-RuvA(4)-RuvB(12)-RuvC(2) complex forms which resolves the HJ.

The protein localises to the cytoplasm. It carries out the reaction ATP + H2O = ADP + phosphate + H(+). In terms of biological role, the RuvA-RuvB-RuvC complex processes Holliday junction (HJ) DNA during genetic recombination and DNA repair, while the RuvA-RuvB complex plays an important role in the rescue of blocked DNA replication forks via replication fork reversal (RFR). RuvA specifically binds to HJ cruciform DNA, conferring on it an open structure. The RuvB hexamer acts as an ATP-dependent pump, pulling dsDNA into and through the RuvAB complex. RuvB forms 2 homohexamers on either side of HJ DNA bound by 1 or 2 RuvA tetramers; 4 subunits per hexamer contact DNA at a time. Coordinated motions by a converter formed by DNA-disengaged RuvB subunits stimulates ATP hydrolysis and nucleotide exchange. Immobilization of the converter enables RuvB to convert the ATP-contained energy into a lever motion, pulling 2 nucleotides of DNA out of the RuvA tetramer per ATP hydrolyzed, thus driving DNA branch migration. The RuvB motors rotate together with the DNA substrate, which together with the progressing nucleotide cycle form the mechanistic basis for DNA recombination by continuous HJ branch migration. Branch migration allows RuvC to scan DNA until it finds its consensus sequence, where it cleaves and resolves cruciform DNA. This is Holliday junction branch migration complex subunit RuvB from Prochlorococcus marinus (strain MIT 9515).